Consider the following 420-residue polypeptide: Type II methyltransferase M.HgiCI (420 aa).

The region spanning 2–417 is the SAM-dependent MTase C5-type domain; the sequence is LKFIDLFAGI…LDLFKSADLA (416 aa). Residue Cys-75 is part of the active site.

It belongs to the class I-like SAM-binding methyltransferase superfamily. C5-methyltransferase family.

The catalysed reaction is a 2'-deoxycytidine in DNA + S-adenosyl-L-methionine = a 5-methyl-2'-deoxycytidine in DNA + S-adenosyl-L-homocysteine + H(+). Its function is as follows. A methylase that recognizes the double-stranded sequence 5'-GGYRCC-3', methylates C-5 on both strands, and protects the DNA from cleavage by the HgiCI endonuclease. This is Type II methyltransferase M.HgiCI (hgiCIM) from Herpetosiphon aurantiacus (Herpetosiphon giganteus).